A 508-amino-acid chain; its full sequence is MLO-like protein 3 (508 aa).

The Extracellular segment spans residues 1 to 21 (MTDKEESNHSSEVGAVRSLQE). The helical transmembrane segment at 22–42 (TPTWALATVCFFFIAVSICLE) threads the bilayer. The Cytoplasmic portion of the chain corresponds to 43–68 (RLINLLSTRLKKNRKTSLLEAVEKLK). Residues 69-89 (SVLMVLGFMSLMLNVTEGEVS) traverse the membrane as a helical segment. The Extracellular portion of the chain corresponds to 90 to 153 (KICIPIKYAN…SEEGLTQLSY (64 aa)). A helical transmembrane segment spans residues 154 to 174 (FFFVLACMHILCNLAILLLGM). Over 175–275 (AKMRKWNSWE…IQRSLHEDFK (101 aa)) the chain is Cytoplasmic. A helical transmembrane segment spans residues 276-296 (TVVGISPLMWLTVVIFMLLDV). Topologically, residues 297–304 (SGWRVYFY) are extracellular. The chain crosses the membrane as a helical span at residues 305–325 (MSFVPLIIVLVIGTKLEMIVA). Residues 326–357 (KMAVTIKENNSVIRGTPLVESNDTHFWFSNPR) lie on the Cytoplasmic side of the membrane. Residues 358–378 (FLLSILHYTLFLNTFEMAFIV) traverse the membrane as a helical segment. Residues 379–401 (WITWQFGINSCYHDNQGIIITRL) are Extracellular-facing. Residues 402–422 (VLAVTVQFLSSYITLPLYAIV) traverse the membrane as a helical segment. Over 423–508 (TQMGSSYKRA…EIQIQEKTER (86 aa)) the chain is Cytoplasmic. The tract at residues 436–457 (EQLANVLRHWQGMVRDKKKTIQ) is calmodulin-binding. A disordered region spans residues 453–492 (KKTIQTPDTDNNSNNNNGDIDSGESPVQTEVASEFRFSGR). Ser-494 is subject to Phosphoserine.

The protein belongs to the MLO family.

It localises to the membrane. Functionally, may be involved in modulation of pathogen defense and leaf cell death. Activity seems to be regulated by Ca(2+)-dependent calmodulin binding and seems not to require heterotrimeric G proteins. The polypeptide is MLO-like protein 3 (MLO3) (Arabidopsis thaliana (Mouse-ear cress)).